The following is a 507-amino-acid chain: Maturase K (507 aa).

The protein belongs to the intron maturase 2 family. MatK subfamily.

The protein resides in the plastid. It localises to the chloroplast. Its function is as follows. Usually encoded in the trnK tRNA gene intron. Probably assists in splicing its own and other chloroplast group II introns. The protein is Maturase K of Annona muricata (Soursop).